Consider the following 446-residue polypeptide: UDP-N-acetylglucosamine--dolichyl-phosphate N-acetylglucosaminephosphotransferase (446 aa).

The next 2 membrane-spanning stretches (helical) occupy residues 1 to 21 (MIESCFNVGIWATGLALLMNQ) and 25 to 45 (PLLSNVGLSVLAYKATAMFIP). UDP-N-acetyl-alpha-D-glucosamine contacts are provided by residues 59–61 (KDM) and Glu71. 2 helical membrane-spanning segments follow: residues 73 to 93 (MGAVSALVYFMCMIIFIPVLF) and 123 to 143 (LLGAYLSALLSILSVSLLGIL). Lys154 contributes to the dolichyl phosphate binding site. The next 2 helical transmembrane spans lie at 155–175 (FFLPAIAAIPLLVVYYVDYGV) and 191–211 (SLINLGFLYYFYMAAVAIFCP). Residue 208-216 (IFCPNSINI) participates in dolichyl phosphate binding. Position 215 (Asn215) interacts with Mg(2+). The next 4 helical transmembrane spans lie at 216 to 236 (IIAGVNGVEAGQSLVLALVIA), 254 to 274 (AHLLSLYLVLPLIGVTAGLLK), 282 to 302 (VFVGDTFCYFAGMVMAVVGIL), and 311 to 331 (LFFIPQIFNFALSVPQLFGLV). Asn221 serves as a coordination point for UDP-N-acetyl-alpha-D-glucosamine. Mg(2+) is bound at residue Asp286. Position 335 to 337 (335 to 337 (RHR)) interacts with UDP-N-acetyl-alpha-D-glucosamine. N-linked (GlcNAc...) asparagine glycosylation is present at Asn395. The helical transmembrane segment at 412 to 432 (DHLTICIMGLQLLTGIFGLII) threads the bilayer.

It belongs to the glycosyltransferase 4 family. Requires Mg(2+) as cofactor.

The protein resides in the endoplasmic reticulum membrane. The catalysed reaction is a di-trans,poly-cis-dolichyl phosphate + UDP-N-acetyl-alpha-D-glucosamine = an N-acetyl-alpha-D-glucosaminyl-diphospho-di-trans,poly-cis-dolichol + UMP. Its pathway is protein modification; protein glycosylation. Its activity is regulated as follows. Inhibited by natural nucleoside antibiotic tunicamycin, which acts as a structural analog and competitor of UDP-GlcNAc. Its function is as follows. UDP-N-acetylglucosamine--dolichyl-phosphate N-acetylglucosaminephosphotransferase that operates in the biosynthetic pathway of dolichol-linked oligosaccharides, the glycan precursors employed in protein asparagine (N)-glycosylation. The assembly of dolichol-linked oligosaccharides begins on the cytosolic side of the endoplasmic reticulum membrane and finishes in its lumen. The sequential addition of sugars to dolichol pyrophosphate produces dolichol-linked oligosaccharides containing fourteen sugars, including two GlcNAcs, nine mannoses and three glucoses. Once assembled, the oligosaccharide is transferred from the lipid to nascent proteins by oligosaccharyltransferases. Catalyzes the initial step of dolichol-linked oligosaccharide biosynthesis, transfering GlcNAc-1-P from cytosolic UDP-GlcNAc onto the carrier lipid dolichyl phosphate (P-dolichol), yielding GlcNAc-P-P-dolichol embedded in the cytoplasmic leaflet of the endoplasmic reticulum membrane. This is UDP-N-acetylglucosamine--dolichyl-phosphate N-acetylglucosaminephosphotransferase (gpt2) from Schizosaccharomyces pombe (strain 972 / ATCC 24843) (Fission yeast).